A 105-amino-acid chain; its full sequence is V-type ATP synthase subunit F (105 aa).

Belongs to the V-ATPase F subunit family.

Produces ATP from ADP in the presence of a proton gradient across the membrane. The polypeptide is V-type ATP synthase subunit F (Fusobacterium nucleatum subsp. nucleatum (strain ATCC 25586 / DSM 15643 / BCRC 10681 / CIP 101130 / JCM 8532 / KCTC 2640 / LMG 13131 / VPI 4355)).